Here is a 459-residue protein sequence, read N- to C-terminus: Prenyltransferase penI (459 aa).

L-tryptophan-binding positions include 107 to 108 and E111; that span reads VV. The substrate site is built by R126, R276, K278, Y280, and Y384.

Belongs to the tryptophan dimethylallyltransferase family.

It carries out the reaction quinolinone B + dimethylallyl diphosphate = peniprequinolone + diphosphate. Its pathway is secondary metabolite biosynthesis. The protein operates within alkaloid biosynthesis. It participates in mycotoxin biosynthesis. Prenyltransferase; part of the gene cluster that mediates the biosynthesis of penigequinolones, potent insecticidal alkaloids that contain a highly modified 10-carbon prenyl group. The first stage is catalyzed by the nonribosomal peptide synthetase penN that condenses anthranilic acid and O-methyl-L-tyrosine to produce 4'-methoxycyclopeptin. 4'-methoxycyclopeptin is then converted to 4'-methoxydehydrocyclopeptin by the ketoglutarate-dependent dioxygenase penM through dehydrogenation to form a double bond between C-alpha and C-beta of the O-methyltyrosine side chain. PenM also converts its first product methoxydehydrocyclopeptin to 4'-methoxycyclopenin. The following conversion of 4'methoxycyclopenin into 4'-methoxyviridicatin is catalyzed by the cyclopenase penL. 4'-methoxyviridicatin is the precursor of quinolone natural products, and is further converted to quinolinone B. The prenyltransferase penI then catalyzes the canonical Friedel-Crafts alkylation of quinolinone B with dimethylallyl cation to yield dimethylallyl quinolone, which is subjected to FAD-dependent dehydrogenation by the FAD-linked oxidoreductase penH to yield conjugated aryl diene. The delta(3') double bond then serves as the site of the second alkylation with DMAPP catalyzed by the prenyltransferase penG to yield a carbenium ion intermediate, which can be attacked by H(2)O to yield a styrenyl quinolone containing a C3'-hydroxyprenyl chain, or undergo cyclization to yield yaequinolones J1 and J2. The conversion of the styrenyl quinolone into the tetrahydrofuran-containing yaequinolone C is performed by the FAD-dependent monooxygenase penE and involves epoxidation of the terminal C7'-C8' olefin, followed by epoxide ring opening initiated by the C3' hydroxyl group. The predicted cysteine hydrolase penJ acts as an epoxide hydrolase that enhances the rate of the 5-exo-tet cyclization step, increasing the yield of yaequinolone C. PenF catalyzes the cationic rearrangement of the epoxide formed by penE (before ring opening to produce yaequinolone C) into yaequinolone D. Finally, the short-chain dehydrogenase/reductase (SDR)-like reductase penD, catalyzes both the dehydration of yaequinolone D and the reduction of the resulting oxonium to yield penigequinolone. This is Prenyltransferase penI from Penicillium thymicola.